A 343-amino-acid polypeptide reads, in one-letter code: 5-amino-6-(D-ribitylamino)uracil--L-tyrosine 4-hydroxyphenyl transferase (343 aa).

A Radical SAM core domain is found at V39 to E268. [4Fe-4S] cluster is bound by residues C53, C57, and C60.

This sequence belongs to the radical SAM superfamily. CofH family. As to quaternary structure, consists of two subunits, CofG and CofH. The cofactor is [4Fe-4S] cluster.

It carries out the reaction 5-amino-6-(D-ribitylamino)uracil + L-tyrosine + S-adenosyl-L-methionine = 5-amino-5-(4-hydroxybenzyl)-6-(D-ribitylimino)-5,6-dihydrouracil + 2-iminoacetate + 5'-deoxyadenosine + L-methionine + H(+). Its pathway is cofactor biosynthesis; coenzyme F0 biosynthesis. In terms of biological role, catalyzes the radical-mediated synthesis of 5-amino-5-(4-hydroxybenzyl)-6-(D-ribitylimino)-5,6-dihydrouracil from 5-amino-6-(D-ribitylamino)uracil and L-tyrosine. This Archaeoglobus fulgidus (strain ATCC 49558 / DSM 4304 / JCM 9628 / NBRC 100126 / VC-16) protein is 5-amino-6-(D-ribitylamino)uracil--L-tyrosine 4-hydroxyphenyl transferase.